The following is a 480-amino-acid chain: Sulfate adenylyltransferase subunit 1 (480 aa).

The region spanning lysine 30–lysine 248 is the tr-type G domain. A G1 region spans residues glycine 39–serine 46. Glycine 39–serine 46 is a binding site for GTP. The G2 stretch occupies residues glycine 97–aspartate 101. The interval aspartate 118 to glycine 121 is G3. GTP-binding positions include aspartate 118–histidine 122 and asparagine 173–aspartate 176. Residues asparagine 173 to aspartate 176 form a G4 region. Residues serine 211–leucine 213 form a G5 region.

This sequence belongs to the TRAFAC class translation factor GTPase superfamily. Classic translation factor GTPase family. CysN/NodQ subfamily. As to quaternary structure, heterodimer composed of CysD, the smaller subunit, and CysN.

It catalyses the reaction sulfate + ATP + H(+) = adenosine 5'-phosphosulfate + diphosphate. The protein operates within sulfur metabolism; hydrogen sulfide biosynthesis; sulfite from sulfate: step 1/3. In terms of biological role, with CysD forms the ATP sulfurylase (ATPS) that catalyzes the adenylation of sulfate producing adenosine 5'-phosphosulfate (APS) and diphosphate, the first enzymatic step in sulfur assimilation pathway. APS synthesis involves the formation of a high-energy phosphoric-sulfuric acid anhydride bond driven by GTP hydrolysis by CysN coupled to ATP hydrolysis by CysD. The sequence is that of Sulfate adenylyltransferase subunit 1 from Photorhabdus laumondii subsp. laumondii (strain DSM 15139 / CIP 105565 / TT01) (Photorhabdus luminescens subsp. laumondii).